Here is a 687-residue protein sequence, read N- to C-terminus: Bifunctional lysine-specific demethylase and histidyl-hydroxylase NO66 (687 aa).

The interval 1 to 174 is disordered; it reads MSDKNKKVSA…RSCPLPSKKN (174 aa). Basic and acidic residues predominate over residues 23–32; that stretch reads DVQKGTKNSD. Composition is skewed to low complexity over residues 33 to 50 and 58 to 74; these read KNGA…SKNG and KKNG…SSSS. Acidic residues predominate over residues 75-96; that stretch reads GEDEEDDSTDSSDEYESSESGE. Composition is skewed to polar residues over residues 100 to 116 and 136 to 156; these read LNSH…ANTR and RTSS…QQPK. Residues 347–483 form the JmjC domain; it reads NPSSYLVQLR…NLMEKLMPLV (137 aa). Fe cation is bound by residues histidine 387, aspartate 389, and histidine 449.

It belongs to the ROX family. NO66 subfamily. The cofactor is Fe(2+).

Its subcellular location is the nucleus. The catalysed reaction is N(6),N(6)-dimethyl-L-lysyl(36)-[histone H3] + 2 2-oxoglutarate + 2 O2 = L-lysyl(36)-[histone H3] + 2 formaldehyde + 2 succinate + 2 CO2. Oxygenase that can act as both a histone lysine demethylase and a ribosomal histidine hydroxylase. Specifically demethylates 'Lys-4' (H3K4me) and 'Lys-36' (H3K36me) of histone H3, thereby playing a central role in histone code. This chain is Bifunctional lysine-specific demethylase and histidyl-hydroxylase NO66, found in Drosophila persimilis (Fruit fly).